The sequence spans 101 residues: Small ribosomal subunit protein cS23 (101 aa).

Belongs to the chloroplast-specific ribosomal protein cS23 family. In terms of assembly, part of the 30S ribosomal subunit.

It localises to the plastid. Its subcellular location is the chloroplast. Its function is as follows. Probably a ribosomal protein or a ribosome-associated protein. The protein is Small ribosomal subunit protein cS23 (ycf65) of Euglena stellata.